A 223-amino-acid chain; its full sequence is Glycolipid transfer protein 2 (223 aa).

A ganglioside GM3 (d18:1(4E)) contacts are provided by Asp69, Asn73, Trp116, and His155.

It belongs to the GLTP family.

In terms of biological role, transfers glycolipids in vitro. This is Glycolipid transfer protein 2 from Arabidopsis thaliana (Mouse-ear cress).